Consider the following 195-residue polypeptide: Pyruvoyl-dependent arginine decarboxylase AaxB (195 aa).

Position 53 is a pyruvic acid (Ser) (serine 53).

This sequence belongs to the pyruvoyl-dependent arginine decarboxylase family. Trimer of an alpha-beta dimer. Requires pyruvate as cofactor.

The protein resides in the cytoplasm. It catalyses the reaction L-arginine + H(+) = agmatine + CO2. Its function is as follows. Part of the AaxABC system, catalyzes the decarboxylation of L-arginine. The arginine uptake by the bacterium in the macrophage may be a virulence factor against the host innate immune response. The protein is Pyruvoyl-dependent arginine decarboxylase AaxB (aaxB) of Chlamydia muridarum (strain MoPn / Nigg).